The following is a 29-amino-acid chain: Kappa-theraphotoxin-Ps1a (29 aa).

Intrachain disulfides connect cysteine 2–cysteine 16, cysteine 9–cysteine 21, and cysteine 15–cysteine 25. An Isoleucine amide modification is found at isoleucine 29.

The protein belongs to the neurotoxin 30 (phrixotoxin) family. In terms of tissue distribution, expressed by the venom gland.

The protein resides in the secreted. Potent and specific blocker of Kv4.2/KCND2 (IC(50)=5 nM) and Kv4.3/KCND3 (IC(50)=28 nM) potassium channels. Acts by altering the gating properties of these channels. Also shows moderate inhibition on human voltage-gated sodium channel Nav1.7/SCN9A activation (IC(50)=423 nM). The chain is Kappa-theraphotoxin-Ps1a from Paraphysa scrofa (Chilean copper tarantula).